The sequence spans 98 residues: Feather keratin 3 (98 aa).

Belongs to the avian keratin family. In terms of assembly, the avian keratins (F-ker, S-ker, C-ker and B-ker) are a complex mixture of very similar polypeptides.

The chain is Feather keratin 3 from Gallus gallus (Chicken).